The sequence spans 147 residues: D-aminoacyl-tRNA deacylase (147 aa).

The Gly-cisPro motif, important for rejection of L-amino acids motif lies at 136–137 (GP).

This sequence belongs to the DTD family. As to quaternary structure, homodimer.

The protein localises to the cytoplasm. It catalyses the reaction glycyl-tRNA(Ala) + H2O = tRNA(Ala) + glycine + H(+). It carries out the reaction a D-aminoacyl-tRNA + H2O = a tRNA + a D-alpha-amino acid + H(+). In terms of biological role, an aminoacyl-tRNA editing enzyme that deacylates mischarged D-aminoacyl-tRNAs. Also deacylates mischarged glycyl-tRNA(Ala), protecting cells against glycine mischarging by AlaRS. Acts via tRNA-based rather than protein-based catalysis; rejects L-amino acids rather than detecting D-amino acids in the active site. By recycling D-aminoacyl-tRNA to D-amino acids and free tRNA molecules, this enzyme counteracts the toxicity associated with the formation of D-aminoacyl-tRNA entities in vivo and helps enforce protein L-homochirality. The sequence is that of D-aminoacyl-tRNA deacylase from Streptococcus pneumoniae (strain P1031).